The primary structure comprises 439 residues: Diaminopimelate decarboxylase (439 aa).

K66 bears the N6-(pyridoxal phosphate)lysine mark. Residues G248 and 290–293 each bind pyridoxal 5'-phosphate; that span reads EPGR. 3 residues coordinate substrate: R293, R330, and Y334. C361 functions as the Proton donor in the catalytic mechanism. Residues E362 and Y390 each contribute to the substrate site. Y390 contacts pyridoxal 5'-phosphate.

The protein belongs to the Orn/Lys/Arg decarboxylase class-II family. LysA subfamily. In terms of assembly, homodimer. Pyridoxal 5'-phosphate is required as a cofactor.

The catalysed reaction is meso-2,6-diaminopimelate + H(+) = L-lysine + CO2. It participates in amino-acid biosynthesis; L-lysine biosynthesis via DAP pathway; L-lysine from DL-2,6-diaminopimelate: step 1/1. Its function is as follows. Specifically catalyzes the decarboxylation of meso-diaminopimelate (meso-DAP) to L-lysine. This is Diaminopimelate decarboxylase from Halalkalibacterium halodurans (strain ATCC BAA-125 / DSM 18197 / FERM 7344 / JCM 9153 / C-125) (Bacillus halodurans).